We begin with the raw amino-acid sequence, 318 residues long: Pantothenate kinase (318 aa).

Position 96 to 103 (96 to 103) interacts with ATP; sequence GSVAVGKS.

It belongs to the prokaryotic pantothenate kinase family.

It is found in the cytoplasm. It catalyses the reaction (R)-pantothenate + ATP = (R)-4'-phosphopantothenate + ADP + H(+). It functions in the pathway cofactor biosynthesis; coenzyme A biosynthesis; CoA from (R)-pantothenate: step 1/5. The polypeptide is Pantothenate kinase (Coxiella burnetii (strain RSA 493 / Nine Mile phase I)).